Reading from the N-terminus, the 394-residue chain is HORMA domain-containing protein 1 (394 aa).

The region spanning 24-226 (HQSLVLVKRL…TPFHIFKVKV (203 aa)) is the HORMA domain. The interval 252–394 (KILRDKDVED…RKFSEPKEHI (143 aa)) is disordered. Residues 253–282 (ILRDKDVEDEQEHYTSDDLDMETKMEEQEK) show a composition bias toward basic and acidic residues. Polar residues-rich tracts occupy residues 310–324 (LSISHSQVEQLVNKT) and 343–352 (KMANGNQPVK). Basic and acidic residues predominate over residues 362-374 (QHESGRRVLHHFD). Residue Ser376 is modified to Phosphoserine. A Nuclear localization signal motif is present at residues 383–386 (KRRK).

In terms of assembly, interacts with HORMAD2. Interacts with IHO1. Phosphorylated at Ser-377 in a SPO11-dependent manner.

It is found in the nucleus. It localises to the chromosome. Plays a key role in meiotic progression. Regulates 3 different functions during meiosis: ensures that sufficient numbers of processed DNA double-strand breaks (DSBs) are available for successful homology search by increasing the steady-state numbers of single-stranded DSB ends. Promotes synaptonemal-complex formation independently of its role in homology search. Plays a key role in the male mid-pachytene checkpoint and the female meiotic prophase checkpoint: required for efficient build-up of ATR activity on unsynapsed chromosome regions, a process believed to form the basis of meiotic silencing of unsynapsed chromatin (MSUC) and meiotic prophase quality control in both sexes. In Macaca fascicularis (Crab-eating macaque), this protein is HORMA domain-containing protein 1 (HORMAD1).